Here is a 482-residue protein sequence, read N- to C-terminus: Hydrogenase transcriptional regulatory protein HoxA (482 aa).

In terms of domain architecture, Response regulatory spans 7–121 (TVLVVDDETR…HLIDTVRQAV (115 aa)). Residue D55 is modified to 4-aspartylphosphate. The 228-residue stretch at 167-394 (APGSPLDAVC…LRNEIYRAVA (228 aa)) folds into the Sigma-54 factor interaction domain. ATP contacts are provided by residues 193–200 (GESGTGKE) and 265–274 (EIGDTSPAFQ). The segment at residues 456–475 (KTHAAKELGLSRVGLRQKLL) is a DNA-binding region (H-T-H motif).

It is found in the cytoplasm. In terms of biological role, probable member of the two-component regulatory system involved in the regulation of the hydrogenase activity. HoxA is probably phosphorylated by a sensory component (which could be HoxX) and then acts in conjunction with sigma-54 as a transcriptional activator. In Cupriavidus necator (strain ATCC 17699 / DSM 428 / KCTC 22496 / NCIMB 10442 / H16 / Stanier 337) (Ralstonia eutropha), this protein is Hydrogenase transcriptional regulatory protein HoxA (hoxA).